Consider the following 878-residue polypeptide: MDLDKPSVWGSLKQRTRPLLINLSKKKAKKSPSKPLDLRVQHHLDRRLSLSVPDLLEAEALAPEGRPYSGPQSSYISVPNSLSTAGIVPKSSSSSLKQSEEELDWSQEEASHVHGVDTDSEEIYASPAEEWQAFSQSALDLHKPSLGRDAPEEHDKTHGNDDLNASMTSQHFEEESTLGEASDCVSHLPSPFAYLLTIHLKEGRNLVVRDRCGTSDPYVKFKLNGKTLYKSKVIYKNLNPIWDEIVVLPIQSLDQKLRVKVYDRDLTKSDFMGSAFVVLRDLELNRTTEHILKLEDPNSLEDDMGVIVLNLNLVVKQGDFKRHRWSNRKRLSASKSSLIRNLRLSESLRKNQLWNGIISITLLEGKNVSGGNMTEMFVQLKLGEQRYKSKTLCKSANPQWQEQFDFHYFSDRMGILDIEVWGKDSKKHEERLGTCKVDISALPLKQDNCLELPLESCQGALLMLITLTPCTGVSISDLCVCPFEDPSERQQISQRYAFQNSLKDVKDVGILQVKVLKASDLLAADFSGKSDPFCLLELGNDRLQTHTIYKNLNPEWNKVFTFPIKDIHDVLEVTVFDEDGDKAPDFLGKVAIPLLSIRDGQPNCYVLKNKDLEQAFKGLIYLELDLIYNPVKASIRTFTPREKRFVEDSRKLSKKILSRDVDRVKRLTLAIWNTVQFFKSCFQWESTLRSTIAFVVFLVTVWNFELYMIPLALLLLFLYNFLRPMKGKASSTQDSQESTDVEEEGKEEEKESEKKGIIERIYMVQDIVSTVQNILEEVASFGERIKNVFNWTVPFLSLLACLILAITTVILYFIPLRYIILLWGINKFTKKLRNPYSIDNNELLDFLSRVPSDIQKVQYAELKLCGSHSPLRKKRSTV.

2 disordered regions span residues 20–40 (LINLSKKKAKKSPSKPLDLRV) and 143–178 (KPSLGRDAPEEHDKTHGNDDLNASMTSQHFEEESTL). The span at 149–161 (DAPEEHDKTHGND) shows a compositional bias: basic and acidic residues. C2 domains follow at residues 177 to 292 (TLGE…EHIL), 334 to 452 (SKSS…CLEL), and 486 to 607 (PSER…CYVL). Positions 210, 216, 263, 265, and 270 each coordinate Ca(2+). Ca(2+)-binding residues include D525, D531, D577, D579, and D585. Residues 694 to 714 (FVVFLVTVWNFELYMIPLALL) form a helical membrane-spanning segment. The interval 728–752 (KASSTQDSQESTDVEEEGKEEEKES) is disordered. Acidic residues predominate over residues 737–746 (ESTDVEEEGK). Residues 794 to 814 (PFLSLLACLILAITTVILYFI) traverse the membrane as a helical segment.

This sequence belongs to the MCTP family. Ca(2+) is required as a cofactor.

The protein resides in the membrane. Its function is as follows. Might play a role in the development of cardiac outflow tract. The protein is Multiple C2 and transmembrane domain-containing protein 2 (Mctp2) of Mus musculus (Mouse).